The sequence spans 888 residues: C2H2 zinc finger transcription factor sltA (888 aa).

Disordered regions lie at residues 1–78, 132–176, and 388–407; these read MSTS…QRSP, IDSQ…SSEN, and RSSM…ASAP. Polar residues-rich tracts occupy residues 23-32, 167-176, and 388-397; these read PSLSASTSIE, GLGTSLSSEN, and RSSMPSNREP. C2H2-type zinc fingers lie at residues 500 to 522 and 561 to 586; these read QKCK…EKTH and YKCK…EKAH. Residues 589–663 are disordered; that stretch reads DYVRSKHNGR…PTQTGSGDFP (75 aa). Positions 602–632 are enriched in polar residues; that stretch reads KASNGATPQTPSIATPSSKAQGITTPLTGSE.

The protein resides in the nucleus. In terms of biological role, transcription factor that contributes to azole resistance by coregulating the expression of the drug target erg11A and the drug efflux pump mdr1. Binds to the 5'-AGGCA-3' motif in the promoters of ergosterol biosynthesis and drug pump genes to regulate their expression. Is able to interact with the promoters of sltA, sltB, erg11A, erg13A, erg24A, mdr1, abcE and mfsC. Involved in antifungal drug resistance to azoles, terbinafine, and simvastatin but not amphotericin B or caspofungin. The chain is C2H2 zinc finger transcription factor sltA from Aspergillus fumigatus (strain CBS 144.89 / FGSC A1163 / CEA10) (Neosartorya fumigata).